Reading from the N-terminus, the 519-residue chain is Flavin-dependent halogenase rdc2 (519 aa).

An N-terminal signal peptide occupies residues 1–21 (MSVPKSCTILVAGGGPAGSYA). FAD-binding residues include Gly14, Ala17, and Glu47. Ser324 and Gly325 together coordinate chloride.

This sequence belongs to the flavin-dependent halogenase family.

It functions in the pathway secondary metabolite biosynthesis. In terms of biological role, flavin-dependent halogenase; part of the gene cluster that mediates the biosynthesis of radicicol, a resorcylic acid lactone (RAL) that irreversibly inhibits the HSP90 molecular chaperone, an important target for cancer chemotherapy. Within the cluster, rdc2 is involved in the chlorination of the resorcylic acid lactone (RAL) structure to convert monocillin I into radicicol. Also chlorinates monocillin II to produce 6-cholomonocillin II and monocilllin IV to produce 13-chloromonocillin IV. In contrast to most fungal halogenases, rdc2 has a broad substrate specificity and can accept a variety of macrolactones as the substrates to generate chlorinated derivatives, including dihydroresorcylide, zearalenone, curvularin, or even curcumin. Rdc2 is able to dichlorinate dihydroresorcylide and monocillin IV. Dihydroresorcylide is first chlorinated at position 11 to produce 11-chlorodihydroresorcylide which can be further chlorinated by rdc2 at possition 13. Mororeover, rdc2 can incorporate bromine into dihydroresorcylide to yield the corresponding mono- and di-brominated derivatives. Finally, rdc2 is also able to halogenate the isoquinolines 4-hydroxyisoquinoline and 6-hydroxyisoquinoline into 3-chloro-4-hydroxyisoquinoline and 5-chloro-6-hydroxyisoquinoline, respectively. The radicicol cluster encodes only two apparent post-PKS enzymes, a cytochrome P450 monooxygenase (rdc4) and a non-heme halogenase (rdc2) that could introduce the epoxide and the chlorine, respectively. If this cluster includes all the genes required for radicicol biosynthesis, the remaining structural features of radicicol are presumably generated by the PKSs rdc1 and rdc5. The C-2' ketone could arise if the R-PKS rdc5 and NR-PKS rdc1 each carry out four iterations, in contrast to the five iteration-three iteration split for the hypothemycin PKSs. The origin of the cis 5',6' double bond is not known. The radicicol R-PKS rdc5 ER domain may catalyze either double bond isomerization or reduction in the third iteration. The polypeptide is Flavin-dependent halogenase rdc2 (Metacordyceps chlamydosporia (Nematophagous fungus)).